The following is a 187-amino-acid chain: Cell division protein SepF (187 aa).

Positions 21 to 97 (EVEVPDKQQQ…ATPNNASQES (77 aa)) are disordered. 2 stretches are compositionally biased toward polar residues: residues 38–63 (EQSQ…YTTT) and 70–97 (RMSN…SQES).

It belongs to the SepF family. Homodimer. Interacts with FtsZ.

It is found in the cytoplasm. In terms of biological role, cell division protein that is part of the divisome complex and is recruited early to the Z-ring. Probably stimulates Z-ring formation, perhaps through the cross-linking of FtsZ protofilaments. Its function overlaps with FtsA. This Staphylococcus aureus (strain MRSA252) protein is Cell division protein SepF.